We begin with the raw amino-acid sequence, 285 residues long: MAIKKIISRSNSGIHNATVIDFKKLLTNSKPEKSLLVTLKKHAGRNNQGKITVRHHGGRHKRKYRLIDFKRYHYDNLKATVKSIEYDPNRSCFISLLHYQNGVKTYIISPDGIKVGDQVYSSDHAIDIKLGYCMPLAFIPEGTQVHNIELNPKGGGKIARSAGSYARILGQDETGKYIILQLISGETRKFLKECRATVGVVSNLDHNLVVIGKAGRSRHKGIRPTVRGSAMNPNDHPHGGGEGRSPVGRDAPRTPWGKRHMGVKTRNMKKHSTNLIIRNRKGEQY.

The segment at 215–285 is disordered; it reads GRSRHKGIRP…IIRNRKGEQY (71 aa). Basic residues predominate over residues 256 to 272; it reads WGKRHMGVKTRNMKKHS.

This sequence belongs to the universal ribosomal protein uL2 family. As to quaternary structure, part of the 50S ribosomal subunit. Forms a bridge to the 30S subunit in the 70S ribosome.

One of the primary rRNA binding proteins. Required for association of the 30S and 50S subunits to form the 70S ribosome, for tRNA binding and peptide bond formation. It has been suggested to have peptidyltransferase activity; this is somewhat controversial. Makes several contacts with the 16S rRNA in the 70S ribosome. This Mycoplasma genitalium (strain ATCC 33530 / DSM 19775 / NCTC 10195 / G37) (Mycoplasmoides genitalium) protein is Large ribosomal subunit protein uL2.